The sequence spans 40 residues: Dolichyl-diphosphooligosaccharide--protein glycosyltransferase subunit 4 (40 aa).

Residues 1–4 (MITD) are Lumenal-facing. The chain crosses the membrane as a helical span at residues 5-25 (VQLAIFSNVLGVFLFLLVVAY). Topologically, residues 26 to 40 (HYINANTGKSSIKTK) are cytoplasmic.

It belongs to the OST4 family. Component of the oligosaccharyltransferase (OST) complex.

The protein localises to the endoplasmic reticulum membrane. Its function is as follows. Subunit of the oligosaccharyl transferase (OST) complex that catalyzes the initial transfer of a defined glycan (Glc(3)Man(9)GlcNAc(2) in eukaryotes) from the lipid carrier dolichol-pyrophosphate to an asparagine residue within an Asn-X-Ser/Thr consensus motif in nascent polypeptide chains, the first step in protein N-glycosylation. N-glycosylation occurs cotranslationally and the complex associates with the Sec61 complex at the channel-forming translocon complex that mediates protein translocation across the endoplasmic reticulum (ER). All subunits are required for a maximal enzyme activity. The chain is Dolichyl-diphosphooligosaccharide--protein glycosyltransferase subunit 4 from Drosophila virilis (Fruit fly).